Reading from the N-terminus, the 317-residue chain is tRNA dimethylallyltransferase (317 aa).

Position 14 to 21 (14 to 21) interacts with ATP; the sequence is GPTASGKS. 16-21 provides a ligand contact to substrate; that stretch reads TASGKS. Interaction with substrate tRNA stretches follow at residues 39–42 and 163–167; these read DSVL and QRIQR.

This sequence belongs to the IPP transferase family. As to quaternary structure, monomer. Mg(2+) is required as a cofactor.

It catalyses the reaction adenosine(37) in tRNA + dimethylallyl diphosphate = N(6)-dimethylallyladenosine(37) in tRNA + diphosphate. Functionally, catalyzes the transfer of a dimethylallyl group onto the adenine at position 37 in tRNAs that read codons beginning with uridine, leading to the formation of N6-(dimethylallyl)adenosine (i(6)A). The protein is tRNA dimethylallyltransferase of Xylella fastidiosa (strain 9a5c).